The following is a 484-amino-acid chain: Glutamate--tRNA ligase (484 aa).

A 'HIGH' region motif is present at residues 11–21 (PSPTGYLHIGN). A 'KMSKS' region motif is present at residues 252 to 256 (KLSKR). An ATP-binding site is contributed by K255.

Belongs to the class-I aminoacyl-tRNA synthetase family. Glutamate--tRNA ligase type 1 subfamily. As to quaternary structure, monomer.

It localises to the cytoplasm. It carries out the reaction tRNA(Glu) + L-glutamate + ATP = L-glutamyl-tRNA(Glu) + AMP + diphosphate. In terms of biological role, catalyzes the attachment of glutamate to tRNA(Glu) in a two-step reaction: glutamate is first activated by ATP to form Glu-AMP and then transferred to the acceptor end of tRNA(Glu). This is Glutamate--tRNA ligase from Staphylococcus saprophyticus subsp. saprophyticus (strain ATCC 15305 / DSM 20229 / NCIMB 8711 / NCTC 7292 / S-41).